Reading from the N-terminus, the 565-residue chain is Liver carboxylesterase 1 (565 aa).

The signal sequence occupies residues 1–18 (MWLCALSLISLTACLSLG). A disulfide bond links Cys-87 and Cys-116. The Acyl-ester intermediate role is filled by Ser-221. The cysteines at positions 273 and 284 are disulfide-linked. Glu-353 acts as the Charge relay system in catalysis. The residue at position 378 (Ser-378) is a Phosphoserine. N-linked (GlcNAc...) asparagine glycosylation is present at Asn-388. His-466 acts as the Charge relay system in catalysis. The N-linked (GlcNAc...) asparagine glycan is linked to Asn-489.

It belongs to the type-B carboxylesterase/lipase family. As to quaternary structure, homotrimer and homohexamer. Binds to beta-glucuronidase. In terms of tissue distribution, detected in kidney, liver and lung.

It localises to the endoplasmic reticulum lumen. It is found in the cytoplasm. Its subcellular location is the lipid droplet. The catalysed reaction is a carboxylic ester + H2O = an alcohol + a carboxylate + H(+). The enzyme catalyses cholesteryl (9Z-octadecenoate) + H2O = cholesterol + (9Z)-octadecenoate + H(+). It carries out the reaction 2-(5Z,8Z,11Z,14Z-eicosatetraenoyl)-glycerol + H2O = glycerol + (5Z,8Z,11Z,14Z)-eicosatetraenoate + H(+). It catalyses the reaction prostaglandin E2 1-glyceryl ester + H2O = prostaglandin E2 + glycerol + H(+). The catalysed reaction is a cholesterol ester + H2O = cholesterol + a fatty acid + H(+). The enzyme catalyses prostaglandin F2alpha 1-glyceryl ester + H2O = prostaglandin F2alpha + glycerol + H(+). Its function is as follows. Involved in the detoxification of xenobiotics and in the activation of ester and amide prodrugs. Hydrolyzes aromatic and aliphatic esters, but has no catalytic activity toward amides or a fatty acyl-CoA ester. Displays fatty acid ethyl ester synthase activity, catalyzing the ethyl esterification of oleic acid to ethyloleate. Converts monoacylglycerides to free fatty acids and glycerol. Hydrolyzes of 2-arachidonoylglycerol and prostaglandins. Hydrolyzes cellular cholesteryl esters to free cholesterols and promotes reverse cholesterol transport (RCT) by facilitating both the initial and final steps in the process. First of all, allows free cholesterol efflux from macrophages to extracellular cholesterol acceptors and secondly, releases free cholesterol from lipoprotein-delivered cholesteryl esters in the liver for bile acid synthesis or direct secretion into the bile. In Mus musculus (Mouse), this protein is Liver carboxylesterase 1.